The chain runs to 351 residues: N-acetyl-gamma-glutamyl-phosphate reductase (351 aa).

The active site involves C154.

It belongs to the NAGSA dehydrogenase family. Type 1 subfamily.

Its subcellular location is the cytoplasm. The catalysed reaction is N-acetyl-L-glutamate 5-semialdehyde + phosphate + NADP(+) = N-acetyl-L-glutamyl 5-phosphate + NADPH + H(+). It functions in the pathway amino-acid biosynthesis; L-arginine biosynthesis; N(2)-acetyl-L-ornithine from L-glutamate: step 3/4. Its function is as follows. Catalyzes the NADPH-dependent reduction of N-acetyl-5-glutamyl phosphate to yield N-acetyl-L-glutamate 5-semialdehyde. The sequence is that of N-acetyl-gamma-glutamyl-phosphate reductase from Prochlorococcus marinus (strain MIT 9515).